Reading from the N-terminus, the 716-residue chain is DNA ligase (716 aa).

Residues 47–51 (DATYD), 96–97 (SL), and E130 each bind NAD(+). K132 (N6-AMP-lysine intermediate) is an active-site residue. Positions 153, 190, 306, and 330 each coordinate NAD(+). 4 residues coordinate Zn(2+): C435, C438, C453, and C459. The region spanning 638-716 (RSDSAVAGKT…EDEWLKLIEG (79 aa)) is the BRCT domain.

This sequence belongs to the NAD-dependent DNA ligase family. LigA subfamily. Requires Mg(2+) as cofactor. The cofactor is Mn(2+).

The enzyme catalyses NAD(+) + (deoxyribonucleotide)n-3'-hydroxyl + 5'-phospho-(deoxyribonucleotide)m = (deoxyribonucleotide)n+m + AMP + beta-nicotinamide D-nucleotide.. In terms of biological role, DNA ligase that catalyzes the formation of phosphodiester linkages between 5'-phosphoryl and 3'-hydroxyl groups in double-stranded DNA using NAD as a coenzyme and as the energy source for the reaction. It is essential for DNA replication and repair of damaged DNA. In Nitrobacter winogradskyi (strain ATCC 25391 / DSM 10237 / CIP 104748 / NCIMB 11846 / Nb-255), this protein is DNA ligase.